A 625-amino-acid polypeptide reads, in one-letter code: MSITQKVRNWVEEFDVIVARSAFGRWFRLEGCGHPRERKGSRFSLEISAGLTTFFAMAYILAVNATILVDTGGTCECTEANRDDCDKLDDYVLCKEDFHRDLVTATAAISALASFCMGLFANMPVGMAPGMGLNAYFAYQVVGYNGTGRVSYREALLAVFVEGFIFTGLTVIGLRQWLARVIPASLKFATGAGIGLYLTIIGLSPSAGLGVIGHSSSDIVALGGCPPEYLNADYSCNGHQLQSGRMWVGIFCGGVLTAILMMYKFKGAVLAGIALVTITSWPRRSLVTMFPHTLTGDYNFDFFKKVVSFRKINRILVAQQWNVTGGQFAIALITFLYVDIMDMTGTLYSMANYAGLVDPRTQDFEGSAVAYIVDALSISIGSLFGCSPVTAFIESGSGISAGGRTGILGMVVGICFFISLFFAPIFSSIPVWATGSTLVLVGSMMMKSTTLINWSYLGDSIPAFITIALMPFTYSIAYGLIAGIICYALLNSIIYAIDKMSRGRLVPADYNQKEAWTWRVEGGLLPQWVRRLFKGNRRFWEDPDDRKAMDNATLEMATSRSYSEDGKNEKTTHEDVTMKETSLKKMDDERISVDEAVGESESFSNRQQDFRTPYAGIDMDTDDRI.

10 helical membrane-spanning segments follow: residues A49–V69, A107–M127, E154–L174, A192–I212, M246–Y263, F328–Y348, V369–V389, G406–F426, I429–T449, and I465–I485. Positions E595–I625 are disordered.

Belongs to the nucleobase:cation symporter-2 (NCS2) (TC 2.A.40) family. Azg-like subfamily.

It is found in the golgi apparatus membrane. The sequence is that of Putative xanthine/uracil permease C887.17 from Schizosaccharomyces pombe (strain 972 / ATCC 24843) (Fission yeast).